The chain runs to 92 residues: MTRSLKKGPFVADHLLKKIEDLNLKKEKKIIITWSRASTIVPTMIGHTIAVYNGQEHLPIYITDRMIGHKLGEFAPTRNFRGHTKSDKKSRR.

This sequence belongs to the universal ribosomal protein uS19 family.

The protein resides in the plastid. Its subcellular location is the chloroplast. In terms of biological role, protein S19 forms a complex with S13 that binds strongly to the 16S ribosomal RNA. The sequence is that of Small ribosomal subunit protein uS19c from Physcomitrium patens (Spreading-leaved earth moss).